Here is a 185-residue protein sequence, read N- to C-terminus: Ribosome-recycling factor (185 aa).

This sequence belongs to the RRF family.

Its subcellular location is the cytoplasm. Responsible for the release of ribosomes from messenger RNA at the termination of protein biosynthesis. May increase the efficiency of translation by recycling ribosomes from one round of translation to another. This Buchnera aphidicola subsp. Acyrthosiphon pisum (strain 5A) protein is Ribosome-recycling factor.